The primary structure comprises 50 residues: MNKSQDKEKKYFLEYLSLAPVLAVISISVAFSTWAIFNYIFPDLLFHPLP.

A helical membrane pass occupies residues 21–41; the sequence is VLAVISISVAFSTWAIFNYIF.

It belongs to the PsaJ family.

Its subcellular location is the cellular thylakoid membrane. The polypeptide is PsaJ-like protein asl3190 (Nostoc sp. (strain PCC 7120 / SAG 25.82 / UTEX 2576)).